A 475-amino-acid chain; its full sequence is Glycogen synthase (475 aa).

Lys15 is an ADP-alpha-D-glucose binding site.

It belongs to the glycosyltransferase 1 family. Bacterial/plant glycogen synthase subfamily.

The catalysed reaction is [(1-&gt;4)-alpha-D-glucosyl](n) + ADP-alpha-D-glucose = [(1-&gt;4)-alpha-D-glucosyl](n+1) + ADP + H(+). Its pathway is glycan biosynthesis; glycogen biosynthesis. In terms of biological role, synthesizes alpha-1,4-glucan chains using ADP-glucose. This chain is Glycogen synthase, found in Alkaliphilus metalliredigens (strain QYMF).